The following is a 477-amino-acid chain: ATP synthase subunit beta (477 aa).

151-158 (GGAGVGKT) lines the ATP pocket.

The protein belongs to the ATPase alpha/beta chains family. F-type ATPases have 2 components, CF(1) - the catalytic core - and CF(0) - the membrane proton channel. CF(1) has five subunits: alpha(3), beta(3), gamma(1), delta(1), epsilon(1). CF(0) has three main subunits: a(1), b(2) and c(9-12). The alpha and beta chains form an alternating ring which encloses part of the gamma chain. CF(1) is attached to CF(0) by a central stalk formed by the gamma and epsilon chains, while a peripheral stalk is formed by the delta and b chains.

It localises to the cell inner membrane. It catalyses the reaction ATP + H2O + 4 H(+)(in) = ADP + phosphate + 5 H(+)(out). Functionally, produces ATP from ADP in the presence of a proton gradient across the membrane. The catalytic sites are hosted primarily by the beta subunits. The sequence is that of ATP synthase subunit beta from Bradyrhizobium diazoefficiens (strain JCM 10833 / BCRC 13528 / IAM 13628 / NBRC 14792 / USDA 110).